Consider the following 178-residue polypeptide: Meiotically up-regulated gene 95 protein (178 aa).

At 1–12 the chain is on the cytoplasmic side; that stretch reads MNLFVYIAQNPT. A helical; Signal-anchor for type II membrane protein transmembrane segment spans residues 13-30; it reads LTKWFFCCVCTILTMPFF. Residues 31-178 lie on the Lumenal side of the membrane; sequence KKPYRKRGIS…ESIEKPENDN (148 aa).

The protein localises to the endoplasmic reticulum membrane. Has a role in meiosis. This Schizosaccharomyces pombe (strain 972 / ATCC 24843) (Fission yeast) protein is Meiotically up-regulated gene 95 protein (mug95).